The following is a 179-amino-acid chain: ATP synthase subunit delta (179 aa).

It belongs to the ATPase delta chain family. F-type ATPases have 2 components, F(1) - the catalytic core - and F(0) - the membrane proton channel. F(1) has five subunits: alpha(3), beta(3), gamma(1), delta(1), epsilon(1). F(0) has three main subunits: a(1), b(2) and c(10-14). The alpha and beta chains form an alternating ring which encloses part of the gamma chain. F(1) is attached to F(0) by a central stalk formed by the gamma and epsilon chains, while a peripheral stalk is formed by the delta and b chains.

The protein localises to the cell inner membrane. F(1)F(0) ATP synthase produces ATP from ADP in the presence of a proton or sodium gradient. F-type ATPases consist of two structural domains, F(1) containing the extramembraneous catalytic core and F(0) containing the membrane proton channel, linked together by a central stalk and a peripheral stalk. During catalysis, ATP synthesis in the catalytic domain of F(1) is coupled via a rotary mechanism of the central stalk subunits to proton translocation. Its function is as follows. This protein is part of the stalk that links CF(0) to CF(1). It either transmits conformational changes from CF(0) to CF(1) or is implicated in proton conduction. This chain is ATP synthase subunit delta, found in Burkholderia vietnamiensis (strain G4 / LMG 22486) (Burkholderia cepacia (strain R1808)).